The primary structure comprises 95 residues: Aspartyl/glutamyl-tRNA(Asn/Gln) amidotransferase subunit C (95 aa).

Belongs to the GatC family. In terms of assembly, heterotrimer of A, B and C subunits.

It carries out the reaction L-glutamyl-tRNA(Gln) + L-glutamine + ATP + H2O = L-glutaminyl-tRNA(Gln) + L-glutamate + ADP + phosphate + H(+). The enzyme catalyses L-aspartyl-tRNA(Asn) + L-glutamine + ATP + H2O = L-asparaginyl-tRNA(Asn) + L-glutamate + ADP + phosphate + 2 H(+). Its function is as follows. Allows the formation of correctly charged Asn-tRNA(Asn) or Gln-tRNA(Gln) through the transamidation of misacylated Asp-tRNA(Asn) or Glu-tRNA(Gln) in organisms which lack either or both of asparaginyl-tRNA or glutaminyl-tRNA synthetases. The reaction takes place in the presence of glutamine and ATP through an activated phospho-Asp-tRNA(Asn) or phospho-Glu-tRNA(Gln). This is Aspartyl/glutamyl-tRNA(Asn/Gln) amidotransferase subunit C from Bartonella quintana (strain Toulouse) (Rochalimaea quintana).